A 104-amino-acid chain; its full sequence is Colipase-like protein 2 (104 aa).

Residues 1–19 (MAFTQALVTVLAFLVGTLP) form the signal peptide. 5 disulfide bridges follow: Cys-38-Cys-49, Cys-44-Cys-60, Cys-48-Cys-82, Cys-70-Cys-90, and Cys-84-Cys-101.

Belongs to the colipase family.

The protein resides in the secreted. In Rattus norvegicus (Rat), this protein is Colipase-like protein 2 (Clpsl2).